The primary structure comprises 271 residues: Bis(5'-nucleosyl)-tetraphosphatase, symmetrical (271 aa).

The protein belongs to the Ap4A hydrolase family.

It carries out the reaction P(1),P(4)-bis(5'-adenosyl) tetraphosphate + H2O = 2 ADP + 2 H(+). Functionally, hydrolyzes diadenosine 5',5'''-P1,P4-tetraphosphate to yield ADP. The polypeptide is Bis(5'-nucleosyl)-tetraphosphatase, symmetrical (Aliivibrio fischeri (strain ATCC 700601 / ES114) (Vibrio fischeri)).